The sequence spans 212 residues: Uracil phosphoribosyltransferase (212 aa).

5-phospho-alpha-D-ribose 1-diphosphate is bound by residues R78, R103, and 130–138 (DPMLATGGS). Residues I193 and 198–200 (GDA) each bind uracil. Residue D199 coordinates 5-phospho-alpha-D-ribose 1-diphosphate.

The protein belongs to the UPRTase family. Mg(2+) is required as a cofactor.

It catalyses the reaction UMP + diphosphate = 5-phospho-alpha-D-ribose 1-diphosphate + uracil. The protein operates within pyrimidine metabolism; UMP biosynthesis via salvage pathway; UMP from uracil: step 1/1. Its activity is regulated as follows. Allosterically activated by GTP. Catalyzes the conversion of uracil and 5-phospho-alpha-D-ribose 1-diphosphate (PRPP) to UMP and diphosphate. The chain is Uracil phosphoribosyltransferase from Bordetella avium (strain 197N).